The chain runs to 585 residues: Protein DENND6B (585 aa).

Residues 1–10 show a composition bias toward low complexity; that stretch reads MEVPVGPGPR. The disordered stretch occupies residues 1–25; that stretch reads MEVPVGPGPRQAGGGLGATRSSSSG. The region spanning 43-221 is the uDENN domain; it reads ECVCVVTFDL…IQVRIPSRVD (179 aa). One can recognise a cDENN domain in the interval 246 to 373; that stretch reads VHELDLFRCF…VKLKKPSRLK (128 aa). Residues 375 to 499 form the dDENN domain; sequence LDTKPGLYTS…KSPHFDGWYR (125 aa).

It belongs to the DENND6 family.

Its subcellular location is the recycling endosome. It localises to the cytoplasm. Guanine nucleotide exchange factor (GEF) for RAB14. Also has some, lesser GEF activity towards RAB35. This is Protein DENND6B (Dennd6b) from Mus musculus (Mouse).